The chain runs to 272 residues: 3-methyl-2-oxobutanoate hydroxymethyltransferase (272 aa).

The Mg(2+) site is built by D52 and D91. 3-methyl-2-oxobutanoate is bound by residues 52–53 (DS), D91, and K121. Residue E123 coordinates Mg(2+). The Proton acceptor role is filled by E190.

Belongs to the PanB family. In terms of assembly, homodecamer; pentamer of dimers. It depends on Mg(2+) as a cofactor.

It localises to the cytoplasm. The catalysed reaction is 3-methyl-2-oxobutanoate + (6R)-5,10-methylene-5,6,7,8-tetrahydrofolate + H2O = 2-dehydropantoate + (6S)-5,6,7,8-tetrahydrofolate. It functions in the pathway cofactor biosynthesis; (R)-pantothenate biosynthesis; (R)-pantoate from 3-methyl-2-oxobutanoate: step 1/2. Functionally, catalyzes the reversible reaction in which hydroxymethyl group from 5,10-methylenetetrahydrofolate is transferred onto alpha-ketoisovalerate to form ketopantoate. This chain is 3-methyl-2-oxobutanoate hydroxymethyltransferase, found in Christiangramia forsetii (strain DSM 17595 / CGMCC 1.15422 / KT0803) (Gramella forsetii).